The primary structure comprises 722 residues: D-galactosyl-beta-1-&gt;4-L-rhamnose phosphorylase (722 aa).

Catalysis depends on D319, which acts as the Proton donor.

This sequence belongs to the glycoside hydrolase 112 family.

The enzyme catalyses beta-D-galactosyl-(1-&gt;4)-L-rhamnose + phosphate = alpha-D-galactose 1-phosphate + L-rhamnopyranose. In terms of biological role, reversibly phosphorolyzes beta-D-galactosyl-(1-&gt;4)-L-rhamnose to form alpha-D-galactose 1-phosphate and L-rhamnose. Does not phosphorolyze galacto-N-biose or lacto-N-biose. In the reverse reaction, has the highest activity toward L-rhamnose, also has activity toward L-mannose, and low activity toward L-lyxose, D-glucose, 2-deoxy-D-glucose and D-galactose. The sequence is that of D-galactosyl-beta-1-&gt;4-L-rhamnose phosphorylase from Lachnoclostridium phytofermentans (strain ATCC 700394 / DSM 18823 / ISDg) (Clostridium phytofermentans).